The following is a 129-amino-acid chain: Small ribosomal subunit protein uS11 (129 aa).

Belongs to the universal ribosomal protein uS11 family. Part of the 30S ribosomal subunit. Interacts with proteins S7 and S18. Binds to IF-3.

Its function is as follows. Located on the platform of the 30S subunit, it bridges several disparate RNA helices of the 16S rRNA. Forms part of the Shine-Dalgarno cleft in the 70S ribosome. The sequence is that of Small ribosomal subunit protein uS11 from Geobacillus thermodenitrificans (strain NG80-2).